A 128-amino-acid polypeptide reads, in one-letter code: 2-iminobutanoate/2-iminopropanoate deaminase (128 aa).

Residue R105 coordinates substrate.

The protein belongs to the RutC family. As to quaternary structure, homotrimer.

It is found in the cytoplasm. It catalyses the reaction 2-iminobutanoate + H2O = 2-oxobutanoate + NH4(+). The enzyme catalyses 2-iminopropanoate + H2O = pyruvate + NH4(+). The protein operates within amino-acid biosynthesis; L-isoleucine biosynthesis; 2-oxobutanoate from L-threonine. In terms of biological role, accelerates the release of ammonia from reactive enamine/imine intermediates of the PLP-dependent threonine dehydratase (IlvA) in the low water environment of the cell. It catalyzes the deamination of enamine/imine intermediates to yield 2-ketobutyrate and ammonia. It is required for the detoxification of reactive intermediates of IlvA due to their highly nucleophilic abilities and to avoid they are captured by anthranilate phosphoribosyltransferase (TrpD) to generate PRA, an intermediate in the alternative pyrimidine biosynthetic (APB) pathway. Also required for full activity of IlvE which is involved in the isoleucine biosynthesis. RidA also accelerates the release of pyruvate produced by IlvA from L-serine. This Salmonella typhimurium (strain LT2 / SGSC1412 / ATCC 700720) protein is 2-iminobutanoate/2-iminopropanoate deaminase.